The sequence spans 463 residues: Cysteine--tRNA ligase (463 aa).

Cys-27 contributes to the Zn(2+) binding site. The 'HIGH' region signature appears at 29 to 39 (ATVQGLPHIGH). Positions 205, 230, and 234 each coordinate Zn(2+). A 'KMSKS' region motif is present at residues 261–265 (KMSKS). Lys-264 contributes to the ATP binding site.

This sequence belongs to the class-I aminoacyl-tRNA synthetase family. In terms of assembly, monomer. The cofactor is Zn(2+).

The protein resides in the cytoplasm. The catalysed reaction is tRNA(Cys) + L-cysteine + ATP = L-cysteinyl-tRNA(Cys) + AMP + diphosphate. In Mycolicibacterium vanbaalenii (strain DSM 7251 / JCM 13017 / BCRC 16820 / KCTC 9966 / NRRL B-24157 / PYR-1) (Mycobacterium vanbaalenii), this protein is Cysteine--tRNA ligase.